We begin with the raw amino-acid sequence, 611 residues long: Dehydrogenase pkfF (611 aa).

The N-terminal stretch at 1–19 is a signal peptide; it reads MRHTALLPLVSSFIVPALA. Residues Asn28 and Asn38 are each glycosylated (N-linked (GlcNAc...) asparagine). FAD contacts are provided by residues 50–51, 71–72, and 137–140; these read TS, EA, and HYMV. Residues Asn180, Asn187, Asn240, Asn272, Asn409, and Asn471 are each glycosylated (N-linked (GlcNAc...) asparagine). The Proton acceptor role is filled by His547. FAD contacts are provided by residues Ala581 and 592-593; that span reads PQ.

The protein belongs to the GMC oxidoreductase family. It depends on FAD as a cofactor.

The protein operates within secondary metabolite biosynthesis. Dehydrogenase; part of the gene cluster that mediates the biosynthesis of aspernidine A, a prenylated isoindolinone. The starting point of the biosynthesis of aspernidin A is the production of orsellinaldehyde by the non-reducing polyketide synthase pkfA. Hydroxylation, methylation of one of the phenol groups, and prenylation, presumably catalyzed by the prenyltransferase pkfE, would be needed to yield aspernidine D. Subsequently, the cytochrome P450 monooxygenase pkfB is responsible for hydroxylation of aspernidine D to yield aspernidine E. The dehydrogenase pkfF may be responsible for further oxidation of aspernidine E to form a dialdehyde intermediate which is further transformed in a series of steps, some of which are enzyme-mediated, to generate aspernidine A. The possibility that additional enzymes outside of the cluster are involved in aspernidine A biosynthesis cannot be excluded. The protein is Dehydrogenase pkfF of Emericella nidulans (strain FGSC A4 / ATCC 38163 / CBS 112.46 / NRRL 194 / M139) (Aspergillus nidulans).